The chain runs to 920 residues: Plasma membrane ATPase (920 aa).

Residues M1–P11 are compositionally biased toward basic and acidic residues. The disordered stretch occupies residues M1–A71. Residues M1–K117 lie on the Cytoplasmic side of the membrane. Acidic residues predominate over residues S17 to I50. Residues F118–A138 traverse the membrane as a helical segment. The Extracellular portion of the chain corresponds to G139 to D142. The helical transmembrane segment at W143 to I162 threads the bilayer. Residues Q163–N293 are Cytoplasmic-facing. A helical transmembrane segment spans residues G294 to F315. Over Y316 to R326 the chain is Extracellular. Residues Y327–A349 traverse the membrane as a helical segment. Over G350–I721 the chain is Cytoplasmic. D380 functions as the 4-aspartylphosphate intermediate in the catalytic mechanism. Residues D636 and D640 each coordinate Mg(2+). The chain crosses the membrane as a helical span at residues D722 to Y740. Topologically, residues D741–R756 are extracellular. The helical transmembrane segment at L757–L776 threads the bilayer. Residues T777–Q826 lie on the Cytoplasmic side of the membrane. The helical transmembrane segment at L827 to W847 threads the bilayer. Topologically, residues S848 to R859 are extracellular. Residues I860–Y876 form a helical membrane-spanning segment. Over L877–N920 the chain is Cytoplasmic.

Belongs to the cation transport ATPase (P-type) (TC 3.A.3) family. Type IIIA subfamily.

It is found in the cell membrane. The enzyme catalyses ATP + H2O + H(+)(in) = ADP + phosphate + 2 H(+)(out). In terms of biological role, the plasma membrane ATPase of plants and fungi is a hydrogen ion pump. The proton gradient it generates drives the active transport of nutrients by H(+)-symport. The resulting external acidification and/or internal alkinization may mediate growth responses. In Zygosaccharomyces rouxii, this protein is Plasma membrane ATPase.